Here is a 180-residue protein sequence, read N- to C-terminus: YY1-associated factor 2 (180 aa).

Disordered stretches follow at residues 1–24 (MGDKKSPTRPKRQPKPSSDEGYWD), 47–120 (GTST…EVTV), and 132–180 (EKTK…GESH). The segment at 19–48 (DEGYWDCSVCTFRNSAEAFKCMMCDVRKGT) adopts a RanBP2-type zinc-finger fold. The span at 62–73 (QQVTQQFVPPTQ) shows a compositional bias: low complexity. The span at 74 to 93 (SKKEKKDKVEKEKSEKETTS) shows a compositional bias: basic and acidic residues. The span at 95 to 105 (KNSHKKTRPRL) shows a compositional bias: basic residues. 2 stretches are compositionally biased toward low complexity: residues 136-156 (SPPASSAASADQHSQSGSSSD) and 163-174 (SRSSSPRGEASS). Ser-167 carries the phosphoserine modification.

In terms of assembly, interacts with MYC, MYCN, RNF2/RING1B and YY1. Part of the E2F6.com-1 complex in G0 phase composed of E2F6, MGA, MAX, TFDP1, CBX3, BAT8, EUHMTASE1, RING1, RNF2, MBLR, L3MBTL2 and YAF2.

Its subcellular location is the nucleus. Its function is as follows. Binds to MYC and inhibits MYC-mediated transactivation. Also binds to MYCN and enhances MYCN-dependent transcriptional activation. Increases calpain 2-mediated proteolysis of YY1 in vitro. Component of the E2F6.com-1 complex, a repressive complex that methylates 'Lys-9' of histone H3, suggesting that it is involved in chromatin-remodeling. The sequence is that of YY1-associated factor 2 (YAF2) from Homo sapiens (Human).